A 327-amino-acid chain; its full sequence is GMP reductase (327 aa).

Cysteine 176 (thioimidate intermediate) is an active-site residue. An NADP(+)-binding site is contributed by 205 to 228; sequence IIADGGIRTHGDIAKSIRFGASMV.

It belongs to the IMPDH/GMPR family. GuaC type 2 subfamily.

It carries out the reaction IMP + NH4(+) + NADP(+) = GMP + NADPH + 2 H(+). Functionally, catalyzes the irreversible NADPH-dependent deamination of GMP to IMP. It functions in the conversion of nucleobase, nucleoside and nucleotide derivatives of G to A nucleotides, and in maintaining the intracellular balance of A and G nucleotides. In Streptococcus pyogenes serotype M6 (strain ATCC BAA-946 / MGAS10394), this protein is GMP reductase.